The chain runs to 239 residues: MSVPVLRVRRLGLVGYAEALGVQGRYVRELKAGGEAGSPGGALLLCEHPAVYTVGVRRGRYPGEEEARLRGLGADFQRTDRGGLITFHGPGQLVCYPVLHLGALRRSLRSYVCGLESAVIRLCRGLGLPGERQPDTGVWVRGNKICAIGVHCARHITSHGLALNCNTDLGWFGHIVPCGIVGKGVTSLTQELGRQVTIDDIIAPFLEAFEEEFQCQLVPEQNPEQNPVQNRPDRDAGPL.

A mitochondrion-targeting transit peptide spans 1 to 18; it reads MSVPVLRVRRLGLVGYAE. One can recognise a BPL/LPL catalytic domain in the interval 37-217; it reads GSPGGALLLC…AFEEEFQCQL (181 aa). Substrate-binding positions include 81–88, 147–149, and 160–162; these read RGGLITFH, AIG, and GLA. The active-site Acyl-thioester intermediate is the Cys-178. Residues 220 to 239 are disordered; it reads EQNPEQNPVQNRPDRDAGPL.

The protein belongs to the LipB family.

It localises to the mitochondrion. The enzyme catalyses octanoyl-[ACP] + L-lysyl-[protein] = N(6)-octanoyl-L-lysyl-[protein] + holo-[ACP] + H(+). The protein operates within protein modification; protein lipoylation via endogenous pathway; protein N(6)-(lipoyl)lysine from octanoyl-[acyl-carrier-protein]: step 1/2. Functionally, catalyzes the transfer of endogenously produced octanoic acid from octanoyl-acyl-carrier-protein (octanoyl-ACP) onto the lipoyl domains of lipoate-dependent enzymes such as the protein H of the glycine cleavage system (GCSH). Lipoyl-ACP can also act as a substrate although octanoyl-ACP is likely to be the physiological substrate. This chain is Octanoyl-[acyl-carrier-protein]:protein N-octanoyltransferase LIPT2, mitochondrial (lipt2), found in Xenopus tropicalis (Western clawed frog).